The primary structure comprises 156 residues: Ribosome maturation factor RimP (156 aa).

It belongs to the RimP family.

It is found in the cytoplasm. In terms of biological role, required for maturation of 30S ribosomal subunits. In Lysinibacillus sphaericus (strain C3-41), this protein is Ribosome maturation factor RimP.